Here is a 297-residue protein sequence, read N- to C-terminus: MASYSFQFSTDATGKPGAAKPYREGNRDFVVPVASISGNSELLTNAVLKATEVYTQYGQDRLGQVLISKVKGHAYSDREGTLFIEESNDMNSWTTISSLVVKANTLGETEWIHLTKRYFRFRYANGNLQQSEFLLYQSLGAGEEDININHTVPITAVAPFSVQLDKSGLTNDGRLKVQTEGLNLSSLDTQSKTMDIVFHDKTETIGEGNPFTVGSFKTLLIEVYGTAETSELKFWGKSLSGTKRALRGQKVDDGTFATSTKGKSEAWSFSITGFKEIVMELTALTNGNFSVRGTAVS.

Residues 1–12 are compositionally biased toward polar residues; that stretch reads MASYSFQFSTDA. Residues 1–21 are disordered; sequence MASYSFQFSTDATGKPGAAKP.

This sequence to B.subtilis XkdY/XepA.

This is an uncharacterized protein from Bacillus subtilis (strain 168).